Consider the following 260-residue polypeptide: Glutamate racemase (260 aa).

Residues 14–15 and 46–47 contribute to the substrate site; these read DS and YG. Residue C77 is the Proton donor/acceptor of the active site. 78-79 contributes to the substrate binding site; it reads NT. C188 (proton donor/acceptor) is an active-site residue. 189 to 190 lines the substrate pocket; that stretch reads TH.

This sequence belongs to the aspartate/glutamate racemases family.

The catalysed reaction is L-glutamate = D-glutamate. Its pathway is cell wall biogenesis; peptidoglycan biosynthesis. In terms of biological role, provides the (R)-glutamate required for cell wall biosynthesis. The chain is Glutamate racemase from Clostridium perfringens (strain SM101 / Type A).